We begin with the raw amino-acid sequence, 121 residues long: Chronic lymphocytic leukemia up-regulated protein 1 (121 aa).

Specifically expressed in chronic lymphocytic leukemia (CLL) cells from patients without immunoglobulin heavy-chain hypermutations. Expression is detected in all CLL cells and levels are similar in patients before and after treatment.

The protein localises to the cytoplasm. This chain is Chronic lymphocytic leukemia up-regulated protein 1 (CLLU1), found in Homo sapiens (Human).